The primary structure comprises 283 residues: 2-dehydro-3-deoxyphosphooctonate aldolase (283 aa).

The protein belongs to the KdsA family.

The protein resides in the cytoplasm. It catalyses the reaction D-arabinose 5-phosphate + phosphoenolpyruvate + H2O = 3-deoxy-alpha-D-manno-2-octulosonate-8-phosphate + phosphate. Its pathway is carbohydrate biosynthesis; 3-deoxy-D-manno-octulosonate biosynthesis; 3-deoxy-D-manno-octulosonate from D-ribulose 5-phosphate: step 2/3. It participates in bacterial outer membrane biogenesis; lipopolysaccharide biosynthesis. The chain is 2-dehydro-3-deoxyphosphooctonate aldolase from Shewanella frigidimarina (strain NCIMB 400).